We begin with the raw amino-acid sequence, 260 residues long: NAD-capped RNA hydrolase NudC (260 aa).

R74 contributes to the substrate binding site. The Zn(2+) site is built by C103, C106, C121, and C124. Y129 lines the substrate pocket. The Nudix hydrolase domain maps to P130–T253. A divalent metal cation contacts are provided by A163, E179, and E183. The Nudix box motif lies at G164–G185. Q197–S204 serves as a coordination point for substrate. E224 is an a divalent metal cation binding site. A246 is a binding site for substrate.

It belongs to the Nudix hydrolase family. NudC subfamily. As to quaternary structure, homodimer. The cofactor is Mg(2+). Mn(2+) serves as cofactor. Requires Zn(2+) as cofactor.

It carries out the reaction a 5'-end NAD(+)-phospho-ribonucleoside in mRNA + H2O = a 5'-end phospho-adenosine-phospho-ribonucleoside in mRNA + beta-nicotinamide D-ribonucleotide + 2 H(+). The catalysed reaction is NAD(+) + H2O = beta-nicotinamide D-ribonucleotide + AMP + 2 H(+). The enzyme catalyses NADH + H2O = reduced beta-nicotinamide D-ribonucleotide + AMP + 2 H(+). Functionally, mRNA decapping enzyme that specifically removes the nicotinamide adenine dinucleotide (NAD) cap from a subset of mRNAs by hydrolyzing the diphosphate linkage to produce nicotinamide mononucleotide (NMN) and 5' monophosphate mRNA. The NAD-cap is present at the 5'-end of some mRNAs and stabilizes RNA against 5'-processing. Has preference for mRNAs with a 5'-end purine. Catalyzes the hydrolysis of a broad range of dinucleotide pyrophosphates. This chain is NAD-capped RNA hydrolase NudC, found in Vibrio parahaemolyticus serotype O3:K6 (strain RIMD 2210633).